The following is a 315-amino-acid chain: L-lactate dehydrogenase (315 aa).

Positions 14, 35, and 66 each coordinate NAD(+). Residues glutamine 83, arginine 89, and 121–124 (NPVD) contribute to the substrate site. NAD(+)-binding positions include 119–121 (VAN) and serine 144. Residue 149–152 (DTAR) coordinates substrate. Residue histidine 176 is the Proton acceptor of the active site. Tyrosine 221 bears the Phosphotyrosine mark. A substrate-binding site is contributed by threonine 230.

Belongs to the LDH/MDH superfamily. LDH family. As to quaternary structure, homotetramer.

The protein resides in the cytoplasm. It catalyses the reaction (S)-lactate + NAD(+) = pyruvate + NADH + H(+). Its pathway is fermentation; pyruvate fermentation to lactate; (S)-lactate from pyruvate: step 1/1. Functionally, catalyzes the conversion of lactate to pyruvate. The chain is L-lactate dehydrogenase from Mesomycoplasma hyopneumoniae (strain 232) (Mycoplasma hyopneumoniae).